Here is a 213-residue protein sequence, read N- to C-terminus: Orotate phosphoribosyltransferase (213 aa).

Lys-26 is a 5-phospho-alpha-D-ribose 1-diphosphate binding site. 34-35 (FF) is a binding site for orotate. Residues 72-73 (YK), Arg-99, Lys-100, Lys-103, His-105, and 124-132 (DDVITAGTA) contribute to the 5-phospho-alpha-D-ribose 1-diphosphate site. Positions 128 and 156 each coordinate orotate.

Belongs to the purine/pyrimidine phosphoribosyltransferase family. PyrE subfamily. In terms of assembly, homodimer. Mg(2+) is required as a cofactor.

The catalysed reaction is orotidine 5'-phosphate + diphosphate = orotate + 5-phospho-alpha-D-ribose 1-diphosphate. It functions in the pathway pyrimidine metabolism; UMP biosynthesis via de novo pathway; UMP from orotate: step 1/2. Functionally, catalyzes the transfer of a ribosyl phosphate group from 5-phosphoribose 1-diphosphate to orotate, leading to the formation of orotidine monophosphate (OMP). In Photobacterium profundum (strain SS9), this protein is Orotate phosphoribosyltransferase.